The chain runs to 1056 residues: Potassium transporter TRK1 (1056 aa).

Topologically, residues 1–46 are cytoplasmic; it reads MLYRVSGFYKRHTRNFTNIDYGYYIRNFIHHIASKIYPYAKVVLPN. Residues 47–67 traverse the membrane as a helical segment; that stretch reads FRAAHYFYILTLVILGSILVY. The Extracellular segment spans residues 68-73; it reads PVKTCA. The stretch at 74-90 is an intramembrane region; the sequence is YIDVLFFTAGASTQAGL. At 91–99 the chain is on the extracellular side; sequence NTVNVNDLS. The helical transmembrane segment at 100–122 threads the bilayer; that stretch reads LYQQIVLYLLATLATPIFIHGSL. Residues 123 to 622 lie on the Cytoplasmic side of the membrane; that stretch reads LFVRLYYFER…LGGIEYRAVK (500 aa). Disordered stretches follow at residues 180–276, 290–350, and 404–571; these read REAE…IDPE, KNQE…EDED, and PWTS…SIEN. Residues 186–203 show a composition bias toward low complexity; sequence SSSSPQSSSSQTSQPVST. The segment covering 236-245 has biased composition (basic and acidic residues); that stretch reads EKIHFEEPQR. Residues 335 to 344 show a composition bias toward polar residues; sequence PATNSVGTGN. The span at 412–423 shows a compositional bias: low complexity; sequence TLSNSSKKGSLS. Composition is skewed to acidic residues over residues 428-449 and 469-487; these read DTED…SDIS and YEED…DDGE. Residues 521–533 show a composition bias toward polar residues; sequence RSNTLDTPQQNTS. A compositionally biased stretch (basic residues) spans 537-549; the sequence is KIRKKAPKRKTPR. A compositionally biased stretch (polar residues) spans 553 to 563; sequence NASFNQHSNVS. The chain crosses the membrane as a helical span at residues 623–646; that stretch reads LLIKIIVVYYVGFNIIPGVMLSIW. At 647–665 the chain is on the extracellular side; sequence IYCMPHYKNLMISSSISPA. An intramembrane segment occupies 666 to 682; that stretch reads WWAFFTSQSSFNDLGLT. Over 683 to 693 the chain is Extracellular; that stretch reads LTSNSMMSFNQ. Residues 694 to 710 traverse the membrane as a helical segment; it reads NAFVQILCSFLIVIGNT. The Cytoplasmic segment spans residues 711 to 754; sequence GFPILLRFIIWVMFKTARPLSLYKESLGFLLDHPRRCFTLLFPS. A helical transmembrane segment spans residues 755-778; that stretch reads VPTWWLFFILVVLNGFDLVIFCIL. The Extracellular segment spans residues 779-793; it reads DLHDDTFKGVDMGYR. Residues 794–810 lie within the membrane without spanning it; it reads VLNGLFQAFCTRTVGFS. Residues 811–817 are Extracellular-facing; sequence VMDLSQL. A helical transmembrane segment spans residues 818-841; the sequence is HAATQVSYLIMMYISVLPIAISVR. Over 842–874 the chain is Cytoplasmic; that stretch reads RTNVYEEQSLGVYAKENAEGVDESAPSNYVGSH. Residues 875–896 traverse the membrane as a helical segment; sequence LRNQLSYDLWYICLGLFIICIA. Over 897-909 the chain is Extracellular; the sequence is EGKRLKEQDLRFS. An intramembrane segment occupies 910–928; the sequence is IFAVLFEIVSAYGTVGMSM. Residues 929-942 are Extracellular-facing; sequence GYPGVDCSLSGEFN. The chain crosses the membrane as a helical span at residues 943 to 965; the sequence is VISKLVIIAMMIRGRHRGLPYTI. Residues 966–1056 lie on the Cytoplasmic side of the membrane; that stretch reads DRAIMLPNAA…RYVVRTVSEV (91 aa).

Belongs to the TrkH potassium transport family.

Its subcellular location is the cell membrane. It catalyses the reaction K(+)(in) = K(+)(out). The enzyme catalyses chloride(in) = chloride(out). TRK1-mediated chloride conductance is blocked by 4,4'-diisothiocyanatostilbene-2,2'-disulfonic acid. In terms of biological role, potassium transporter that mediates K(+) influx, as well as Cl(-) efflux as a secondary function. TRK1 is the major K(+) uptake transporter that regulates membrane potential and intracellular pH. The TRK1-mediated Cl(-) efflux should serve as a Cl(-) detoxification route and may play a role in sustaining C.albicans on mammalian epithelial surfaces, or in physiological saline solutions such as saliva. Its function is as follows. Mediates candidacidal activities of cysteine-free peptides, but not of defensins. The hallmark of salivary gland-secreted histatin-5 (Hst 5) killing of C.albicans is the rapid efflux of cellular ATP and other small nucleotides and ions from the cell as well as concurrent intracellular uptake of propidium iodide (PI). TRK1 is the channel for Hst 5-induced killing and histatin-5 may directly or indirectly alter TRK1 function, allowing the efflux of larger anions, including ATP, and the influx of small cationic dyes, such as PI. This chain is Potassium transporter TRK1, found in Candida albicans (strain SC5314 / ATCC MYA-2876) (Yeast).